The following is a 301-amino-acid chain: MADEPKPISPFKNLLAGGFGGMCLVFVGHPLDTVKVRLQTQPPSLSGQPPMYSGTLDCFRKTLMREGITGLYRGMAAPIIGVTPMFAVCFFGFGLGKKLQQKSPEDELSYPQLFTAGMLSGVFTTGIMTPGERIKCLLQIQASSGENKYSGTLDCAKKLYQEFGIRGFYKGTVLTLMRDVPASGMYFMTYEWLKNLFTPEGKSVSDLSVPRILVAGGFAGIFNWAVAIPPDVLKSRFQTAPPGKYPNGFRDVLRELIREEGVTSLYKGFNAVMIRAFPANAACFLGFEIAMKFLNWIAPNL.

Position 2 is an N-acetylalanine (Ala-2). Over 2–12 the chain is Cytoplasmic; sequence ADEPKPISPFK. Solcar repeat units follow at residues 8 to 99, 108 to 196, and 207 to 293; these read ISPF…GKKL, LSYP…LKNL, and LSVP…AMKF. The chain crosses the membrane as a helical span at residues 13-31; that stretch reads NLLAGGFGGMCLVFVGHPL. Residues 32–73 are Mitochondrial matrix-facing; the sequence is DTVKVRLQTQPPSLSGQPPMYSGTLDCFRKTLMREGITGLYR. Residues 74-93 form a helical membrane-spanning segment; it reads GMAAPIIGVTPMFAVCFFGF. At 94–112 the chain is on the cytoplasmic side; sequence GLGKKLQQKSPEDELSYPQ. The chain crosses the membrane as a helical span at residues 113 to 131; it reads LFTAGMLSGVFTTGIMTPG. Residues 132-170 lie on the Mitochondrial matrix side of the membrane; that stretch reads ERIKCLLQIQASSGENKYSGTLDCAKKLYQEFGIRGFYK. An N6-acetyllysine mark is found at Lys-148 and Lys-157. The residue at position 170 (Lys-170) is an N6-acetyllysine; alternate. N6-succinyllysine; alternate is present on Lys-170. The helical transmembrane segment at 171–190 threads the bilayer; the sequence is GTVLTLMRDVPASGMYFMTY. Residues 191-211 lie on the Cytoplasmic side of the membrane; that stretch reads EWLKNLFTPEGKSVSDLSVPR. A helical transmembrane segment spans residues 212-230; sequence ILVAGGFAGIFNWAVAIPP. Residues 231–267 lie on the Mitochondrial matrix side of the membrane; the sequence is DVLKSRFQTAPPGKYPNGFRDVLRELIREEGVTSLYK. A helical transmembrane segment spans residues 268–287; the sequence is GFNAVMIRAFPANAACFLGF. The Cytoplasmic portion of the chain corresponds to 288-301; it reads EIAMKFLNWIAPNL.

It belongs to the mitochondrial carrier (TC 2.A.29) family. In terms of tissue distribution, widely expressed, with highest levels in the liver, intermediate levels in heart, testis and kidney and low levels in brain, including cortex, cerebellum, hippocampus and hypothalamus.

It is found in the mitochondrion inner membrane. The catalysed reaction is O-acetyl-(R)-carnitine(in) + (R)-carnitine(out) = O-acetyl-(R)-carnitine(out) + (R)-carnitine(in). It carries out the reaction an O-acyl-(R)-carnitine(in) + (R)-carnitine(out) = an O-acyl-(R)-carnitine(out) + (R)-carnitine(in). The enzyme catalyses O-propanoyl-(R)-carnitine(in) + (R)-carnitine(out) = O-propanoyl-(R)-carnitine(out) + (R)-carnitine(in). It catalyses the reaction O-hexadecanoyl-(R)-carnitine(in) + (R)-carnitine(out) = O-hexadecanoyl-(R)-carnitine(out) + (R)-carnitine(in). The catalysed reaction is O-octanoyl-(R)-carnitine(in) + (R)-carnitine(out) = O-octanoyl-(R)-carnitine(out) + (R)-carnitine(in). It carries out the reaction (R)-carnitine(in) = (R)-carnitine(out). In terms of biological role, mediates the electroneutral exchange of acylcarnitines (O-acyl-(R)-carnitine or L-acylcarnitine) of different acyl chain lengths (ranging from O-acetyl-(R)-carnitine to long-chain O-acyl-(R)-carnitines) with free carnitine ((R)-carnitine or L-carnitine) across the mitochondrial inner membrane, via a ping-pong mechanism. Key player in the mitochondrial oxidation pathway, it translocates the fatty acids in the form of acylcarnitines into the mitochondrial matrix, where the carnitine palmitoyltransferase 2 (CPT-2) activates them to undergo fatty acid beta-oxidation. Catalyzes the unidirectional transport (uniport) of carnitine at lower rates than the antiport (exchange). The protein is Mitochondrial carnitine/acylcarnitine carrier protein of Mus musculus (Mouse).